The chain runs to 117 residues: uncharacterized protein (117 aa).

3 consecutive transmembrane segments (helical) span residues valine 32–valine 52, valine 56–leucine 76, and leucine 87–phenylalanine 107.

The protein resides in the membrane. This is an uncharacterized protein from Saccharomyces cerevisiae (strain ATCC 204508 / S288c) (Baker's yeast).